The following is a 724-amino-acid chain: Long-chain-fatty-acid--CoA ligase ACSBG1 (724 aa).

Positions 1-30 (MPRNSGAGYGCPHGDPSMLDSRETPQESRQ) are disordered. Residues 20 to 30 (DSRETPQESRQ) are compositionally biased toward basic and acidic residues. A phosphoserine mark is found at S53 and S56. ATP-binding positions include 282 to 290 (TSGTTGNPK), 472 to 477 (AGYGLS), D550, and R565. The residue at position 658 (Y658) is a Phosphotyrosine. K701 provides a ligand contact to ATP.

The protein belongs to the ATP-dependent AMP-binding enzyme family. Bubblegum subfamily. In terms of tissue distribution, expressed primarily in brain. Expressed at lower level in testis and adrenal gland. Present in all regions of brain except pituitary.

The protein resides in the cytoplasm. Its subcellular location is the cytoplasmic vesicle. The protein localises to the microsome. It is found in the endoplasmic reticulum. It localises to the cell membrane. The enzyme catalyses a long-chain fatty acid + ATP + CoA = a long-chain fatty acyl-CoA + AMP + diphosphate. It carries out the reaction (E)-hexadec-2-enoate + ATP + CoA = (2E)-hexadecenoyl-CoA + AMP + diphosphate. It catalyses the reaction hexadecanoate + ATP + CoA = hexadecanoyl-CoA + AMP + diphosphate. Catalyzes the conversion of fatty acids such as long-chain and very long-chain fatty acids to their active form acyl-CoAs for both synthesis of cellular lipids, and degradation via beta-oxidation. Can activate diverse saturated, monosaturated and polyunsaturated fatty acids. This is Long-chain-fatty-acid--CoA ligase ACSBG1 from Homo sapiens (Human).